The sequence spans 296 residues: 4-hydroxybenzoate octaprenyltransferase (296 aa).

Transmembrane regions (helical) follow at residues 28–48 (IGTL…SDGI), 51–71 (LAVL…GCVI), 102–122 (LLLT…LNHL), 143–163 (FFPI…PMAF), 174–194 (AWIL…VYAM), 212–232 (FGRY…LLMA), 233–253 (VLGA…IVLL), and 274–294 (FLAN…HTFF).

Belongs to the UbiA prenyltransferase family. It depends on Mg(2+) as a cofactor.

It localises to the cell inner membrane. The catalysed reaction is all-trans-octaprenyl diphosphate + 4-hydroxybenzoate = 4-hydroxy-3-(all-trans-octaprenyl)benzoate + diphosphate. The protein operates within cofactor biosynthesis; ubiquinone biosynthesis. Its function is as follows. Catalyzes the prenylation of para-hydroxybenzoate (PHB) with an all-trans polyprenyl group. Mediates the second step in the final reaction sequence of ubiquinone-8 (UQ-8) biosynthesis, which is the condensation of the polyisoprenoid side chain with PHB, generating the first membrane-bound Q intermediate 3-octaprenyl-4-hydroxybenzoate. In Neisseria gonorrhoeae (strain NCCP11945), this protein is 4-hydroxybenzoate octaprenyltransferase.